The primary structure comprises 53 residues: ATP synthase protein 8 (53 aa).

Residues Ala-5–Ile-25 traverse the membrane as a helical segment.

It belongs to the ATPase protein 8 family. F-type ATPases have 2 components, CF(1) - the catalytic core - and CF(0) - the membrane proton channel.

It localises to the mitochondrion membrane. In terms of biological role, mitochondrial membrane ATP synthase (F(1)F(O) ATP synthase or Complex V) produces ATP from ADP in the presence of a proton gradient across the membrane which is generated by electron transport complexes of the respiratory chain. F-type ATPases consist of two structural domains, F(1) - containing the extramembraneous catalytic core and F(0) - containing the membrane proton channel, linked together by a central stalk and a peripheral stalk. During catalysis, ATP synthesis in the catalytic domain of F(1) is coupled via a rotary mechanism of the central stalk subunits to proton translocation. Part of the complex F(0) domain. Minor subunit located with subunit a in the membrane. The sequence is that of ATP synthase protein 8 from Aedes aegypti (Yellowfever mosquito).